A 120-amino-acid chain; its full sequence is NAD(P)H-quinone oxidoreductase subunit 3, chloroplastic (120 aa).

The next 3 helical transmembrane spans lie at 9–29 (IFWA…FISG), 64–84 (MFAL…PWAM), and 88–108 (VLGL…IVGL).

It belongs to the complex I subunit 3 family. As to quaternary structure, NDH is composed of at least 16 different subunits, 5 of which are encoded in the nucleus.

The protein localises to the plastid. Its subcellular location is the chloroplast thylakoid membrane. It catalyses the reaction a plastoquinone + NADH + (n+1) H(+)(in) = a plastoquinol + NAD(+) + n H(+)(out). It carries out the reaction a plastoquinone + NADPH + (n+1) H(+)(in) = a plastoquinol + NADP(+) + n H(+)(out). Functionally, NDH shuttles electrons from NAD(P)H:plastoquinone, via FMN and iron-sulfur (Fe-S) centers, to quinones in the photosynthetic chain and possibly in a chloroplast respiratory chain. The immediate electron acceptor for the enzyme in this species is believed to be plastoquinone. Couples the redox reaction to proton translocation, and thus conserves the redox energy in a proton gradient. The protein is NAD(P)H-quinone oxidoreductase subunit 3, chloroplastic of Jasminum nudiflorum (Winter jasmine).